A 251-amino-acid polypeptide reads, in one-letter code: Triosephosphate isomerase (251 aa).

9-11 (NWK) lines the substrate pocket. The active-site Electrophile is the histidine 96. The active-site Proton acceptor is glutamate 168. Substrate contacts are provided by residues glycine 174, serine 214, and 235–236 (GG).

This sequence belongs to the triosephosphate isomerase family. As to quaternary structure, homodimer.

Its subcellular location is the cytoplasm. The catalysed reaction is D-glyceraldehyde 3-phosphate = dihydroxyacetone phosphate. Its pathway is carbohydrate biosynthesis; gluconeogenesis. The protein operates within carbohydrate degradation; glycolysis; D-glyceraldehyde 3-phosphate from glycerone phosphate: step 1/1. In terms of biological role, involved in the gluconeogenesis. Catalyzes stereospecifically the conversion of dihydroxyacetone phosphate (DHAP) to D-glyceraldehyde-3-phosphate (G3P). This chain is Triosephosphate isomerase, found in Porphyromonas gingivalis (strain ATCC BAA-308 / W83).